Consider the following 609-residue polypeptide: 2',5'-phosphodiesterase 12 (609 aa).

The N-terminal 16 residues, 1–16 (MWRLPGVRAALRGVRT), are a transit peptide targeting the mitochondrion. Residues 203–231 (PRAAEPEGGGPSSSSPSSPSPGWTETGVD) are disordered. The span at 214 to 224 (SSSSPSSPSPG) shows a compositional bias: low complexity. Position 217 is a phosphoserine (Ser217). Positions 351, 496, and 498 each coordinate Mg(2+). Asp496 acts as the Proton donor/acceptor in catalysis.

Belongs to the CCR4/nocturin family. Requires Mg(2+) as cofactor. As to expression, liver.

Its subcellular location is the mitochondrion matrix. The enzyme catalyses Exonucleolytic cleavage of poly(A) to 5'-AMP.. Enzyme that cleaves 2',5'-phosphodiester bond linking adenosines of the 5'-triphosphorylated oligoadenylates, triphosphorylated oligoadenylates referred as 2-5A modulates the 2-5A system. Degrades triphosphorylated 2-5A to produce AMP and ATP. Also cleaves 3',5'-phosphodiester bond of oligoadenylates. Plays a role as a negative regulator of the 2-5A system that is one of the major pathways for antiviral and antitumor functions induced by interferons (IFNs). Suppression of this enzyme increases cellular 2-5A levels and decreases viral replication in cultured small-airway epithelial cells. This Bos taurus (Bovine) protein is 2',5'-phosphodiesterase 12 (PDE12).